The primary structure comprises 291 residues: Urease accessory protein UreD (291 aa).

This sequence belongs to the UreD family. UreD, UreF and UreG form a complex that acts as a GTP-hydrolysis-dependent molecular chaperone, activating the urease apoprotein by helping to assemble the nickel containing metallocenter of UreC. The UreE protein probably delivers the nickel.

Its subcellular location is the cytoplasm. Functionally, required for maturation of urease via the functional incorporation of the urease nickel metallocenter. This is Urease accessory protein UreD from Acinetobacter baumannii (strain ACICU).